Consider the following 308-residue polypeptide: Glutaminase (308 aa).

Residues S66, N117, E161, N168, Y192, Y244, and V262 each coordinate substrate.

The protein belongs to the glutaminase family. In terms of assembly, homotetramer.

The enzyme catalyses L-glutamine + H2O = L-glutamate + NH4(+). The chain is Glutaminase from Enterobacter sp. (strain 638).